Consider the following 468-residue polypeptide: Nuclear pore complex protein Nup50 (468 aa).

Over residues 1-16 (MAKRNAEKELTDRNWD) the composition is skewed to basic and acidic residues. The interval 1–26 (MAKRNAEKELTDRNWDQEDEAEEVGT) is disordered. A2 carries the N-acetylalanine modification. Residue K8 is modified to N6-acetyllysine. A Phosphoserine modification is found at S52. Copy 1 of the repeat occupies 76 to 77 (FG). The 5 X 2 AA repeats of F-G stretch occupies residues 76-304 (FGSGAGGKPL…FSPGNSSLFG (229 aa)). The residue at position 83 (K83) is an N6-acetyllysine. The stretch at 113–114 (FG) is repeat 2. Disordered regions lie at residues 122 to 148 (TTLV…LASS) and 201 to 224 (HGNS…SPSL). Position 127 is an N6-acetyllysine (K127). Positions 137 to 148 (SQQPSSSGLASS) are enriched in low complexity. The segment at 144–206 (GLASSKACVG…IEQQHGNSGR (63 aa)) is binding to CDKN1B. Phosphoserine occurs at positions 208 and 221. Repeat 3 spans residues 225–226 (FG). Residue S234 is modified to Phosphoserine. Positions 238 to 269 (FHGNKTEDTPDKKMEVASEKKTDPSSLGATSA) are disordered. Over residues 241–260 (NKTEDTPDKKMEVASEKKTD) the composition is skewed to basic and acidic residues. 2 positions are modified to phosphothreonine: T246 and T259. Position 270 is a phosphoserine (S270). Residues 273 to 274 (FG) form repeat 4. S296 bears the Phosphoserine mark. Repeat 5 spans residues 303–304 (FG). Positions 304–317 (GKDTTQSKPVSSPF) are enriched in polar residues. The interval 304-345 (GKDTTQSKPVSSPFPTKPLEGQAEGDSGECKGGDEEENDEPP) is disordered. A RanBD1 domain is found at 335–468 (GGDEEENDEP…HKILLEKKDA (134 aa)). A Glycyl lysine isopeptide (Lys-Gly) (interchain with G-Cter in SUMO2) cross-link involves residue K353. K450 is subject to N6-acetyllysine.

Interacts with Importin alpha-2, Importin beta, Importin beta-2, NUP153, Ran binding protein 7, CDKN1B and itself. Does not interact with TPR. Ubiquitous. Highest levels in testis, peripheral blood leukocytes and fetal liver.

It is found in the nucleus. The protein resides in the nuclear pore complex. Its subcellular location is the nucleus membrane. Component of the nuclear pore complex that has a direct role in nuclear protein import. Actively displaces NLSs from importin-alpha, and facilitates disassembly of the importin-alpha:beta-cargo complex and importin recycling. Interacts with regulatory proteins of cell cycle progression including CDKN1B. This interaction is required for correct intracellular transport and degradation of CDKN1B. This chain is Nuclear pore complex protein Nup50 (NUP50), found in Homo sapiens (Human).